We begin with the raw amino-acid sequence, 196 residues long: dITP/XTP pyrophosphatase (196 aa).

9-14 provides a ligand contact to substrate; it reads TSNAGK. 2 residues coordinate Mg(2+): Glu-39 and Asp-68. The active-site Proton acceptor is Asp-68. Substrate is bound by residues Ser-69, 147 to 150, Lys-170, and 175 to 176; these read FGYD and HR.

The protein belongs to the HAM1 NTPase family. Homodimer. Mg(2+) serves as cofactor.

It catalyses the reaction XTP + H2O = XMP + diphosphate + H(+). The catalysed reaction is dITP + H2O = dIMP + diphosphate + H(+). The enzyme catalyses ITP + H2O = IMP + diphosphate + H(+). Pyrophosphatase that catalyzes the hydrolysis of nucleoside triphosphates to their monophosphate derivatives, with a high preference for the non-canonical purine nucleotides XTP (xanthosine triphosphate), dITP (deoxyinosine triphosphate) and ITP. Seems to function as a house-cleaning enzyme that removes non-canonical purine nucleotides from the nucleotide pool, thus preventing their incorporation into DNA/RNA and avoiding chromosomal lesions. This chain is dITP/XTP pyrophosphatase, found in Nostoc sp. (strain PCC 7120 / SAG 25.82 / UTEX 2576).